Consider the following 479-residue polypeptide: Proline--tRNA ligase (479 aa).

The protein belongs to the class-II aminoacyl-tRNA synthetase family. ProS type 3 subfamily. Homodimer.

The protein resides in the cytoplasm. The enzyme catalyses tRNA(Pro) + L-proline + ATP = L-prolyl-tRNA(Pro) + AMP + diphosphate. Functionally, catalyzes the attachment of proline to tRNA(Pro) in a two-step reaction: proline is first activated by ATP to form Pro-AMP and then transferred to the acceptor end of tRNA(Pro). This is Proline--tRNA ligase from Agathobacter rectalis (strain ATCC 33656 / DSM 3377 / JCM 17463 / KCTC 5835 / VPI 0990) (Eubacterium rectale).